Consider the following 268-residue polypeptide: MRRIAVMGAAGRMGKTLVEAVQLRSPLSGLTAAIVRPGSSLVGADAGELASLGRLGVPMSDSLEKVVDEFDVLIDFTLPEVMLKNLAFCRKAGKAMVIGTTGLGAREKQLLAEAGKEIPIVFAANFSVGVNLSLKLLDMAARVLGDDADIEIIEAHHRHKIDAPSGTALRMGEVIASALGRDLQQVAVYGREGHTGARERETIGFATVRGGDVVGDHTVLFATEGERLEITHKASSRMTFAKGAVRAALWLDGREAGLYDMQDVLDLR.

8-13 (GAAGRM) serves as a coordination point for NAD(+). Arg-36 lines the NADP(+) pocket. NAD(+) contacts are provided by residues 99–101 (GTT) and 123–126 (AANF). Residue His-156 is the Proton donor/acceptor of the active site. His-157 is a (S)-2,3,4,5-tetrahydrodipicolinate binding site. Lys-160 acts as the Proton donor in catalysis. 166–167 (GT) is a binding site for (S)-2,3,4,5-tetrahydrodipicolinate.

This sequence belongs to the DapB family.

It localises to the cytoplasm. It catalyses the reaction (S)-2,3,4,5-tetrahydrodipicolinate + NAD(+) + H2O = (2S,4S)-4-hydroxy-2,3,4,5-tetrahydrodipicolinate + NADH + H(+). It carries out the reaction (S)-2,3,4,5-tetrahydrodipicolinate + NADP(+) + H2O = (2S,4S)-4-hydroxy-2,3,4,5-tetrahydrodipicolinate + NADPH + H(+). It functions in the pathway amino-acid biosynthesis; L-lysine biosynthesis via DAP pathway; (S)-tetrahydrodipicolinate from L-aspartate: step 4/4. Its function is as follows. Catalyzes the conversion of 4-hydroxy-tetrahydrodipicolinate (HTPA) to tetrahydrodipicolinate. The polypeptide is 4-hydroxy-tetrahydrodipicolinate reductase (Pseudomonas fluorescens (strain ATCC BAA-477 / NRRL B-23932 / Pf-5)).